Reading from the N-terminus, the 153-residue chain is ORM1-like protein 3 (153 aa).

An important for ceramide level-sensing region spans residues 1–17 (MNVGTAHSEVNPNTRVM). The Cytoplasmic segment spans residues 1-21 (MNVGTAHSEVNPNTRVMNSRG). 2 helical membrane-spanning segments follow: residues 22 to 42 (IWLSYVLAIGLLHVVLLSIPF) and 43 to 63 (VSVPVVWTLTNLIHNMGMYIF). Topologically, residues 64–94 (LHTVKGTPFETPDQGKARLLTHWEQMDYGVQ) are cytoplasmic. A helical membrane pass occupies residues 95–117 (FTASRKFLTITPIVLYFLTSFYT). Residues 118 to 121 (KYDQ) are Extracellular-facing. A helical membrane pass occupies residues 122–142 (IHFILNTVSLMSVLIPKLPQL). At proline 137 the chain carries Hydroxyproline. Residues 143-153 (HGVRIFGINKY) lie on the Cytoplasmic side of the membrane.

Belongs to the ORM family. Ceramide-sensitive subunit of the serine palmitoyltransferase (SPT) complex, which is also composed of SPTLC1, SPTLC2/3 and SPTSSA/B. When hydroxylated at Pro-137, ubiquitinated via 'Lys-48'-linkage, leading to proteasomal degradation. In endothelial cells, ORMDL3 proteasomal degradation is controlled by the sphingosine 1-phosphate receptor signaling pathway.

It is found in the endoplasmic reticulum membrane. Its function is as follows. Plays an essential role in the homeostatic regulation of sphingolipid de novo biosynthesis by modulating the activity of the serine palmitoyltransferase (SPT) in response to ceramide levels. When complexed to SPT, the binding of ceramides to its N-terminus stabilizes a conformation that block SPT substrate entry, hence preventing SPT catalytic activity. Through this mechanism, maintains ceramide levels at sufficient concentrations for the production of complex sphingolipids, but which prevents the accumulation of ceramides to levels that trigger apoptosis. The chain is ORM1-like protein 3 (ORMDL3) from Bos taurus (Bovine).